The primary structure comprises 2225 residues: Multifunctional protein CAD (2225 aa).

A2 carries the post-translational modification N-acetylalanine. Positions 2–365 (AALVLEDGSV…TVREAVAGNP (364 aa)) are GATase (Glutamine amidotransferase). S44, G222, and G224 together coordinate L-glutamine. In terms of domain architecture, Glutamine amidotransferase type-1 spans 177–363 (RICALDCGLK…LETVREAVAG (187 aa)). The Nucleophile; for GATase activity role is filled by C252. Residues L253, Q256, N294, G296, and F297 each contribute to the L-glutamine site. Active-site for GATase activity residues include H336 and E338. A linker region spans residues 366–394 (GGQTVKERLVQRLCPPGLLIPGSGLPPPR). Residues 395-933 (KVLILGSGGL…NTHDLDFRTP (539 aa)) are CPSase A. Positions 395 to 1455 (KVLILGSGGL…APPLKVHVDC (1061 aa)) are CPSase (Carbamoyl phosphate synthase). At T456 the chain carries Phosphothreonine; by MAPK1. 11 residues coordinate ATP: R515, R555, G561, G562, K592, E599, G625, I626, H627, Q668, and E682. One can recognise an ATP-grasp 1 domain in the interval 519–711 (AARMAEIGEH…LAYVAAKLAL (193 aa)). 3 residues coordinate Mg(2+): Q668, E682, and N684. Residues Q668, E682, and N684 each coordinate Mn(2+). K747 is subject to N6-acetyllysine. Residues 934–1455 (HVLVLGSGVY…APPLKVHVDC (522 aa)) are CPSase B. The residue at position 1038 (S1038) is a Phosphoserine. The ATP-grasp 2 domain maps to 1052-1243 (SRLLDTIGIS…LVALATRIIM (192 aa)). Residues R1088, K1127, I1129, E1134, G1159, V1160, H1161, S1162, Q1202, and E1214 each coordinate ATP. 3 residues coordinate Mg(2+): Q1202, E1214, and N1216. Positions 1202, 1214, and 1216 each coordinate Mn(2+). The region spanning 1308–1462 (FKIPKKNILL…VDCMTSQKLV (155 aa)) is the MGS-like domain. Phosphoserine; by PKA is present on S1406. K1411 is subject to N6-acetyllysine. A DHOase (dihydroorotase) region spans residues 1456 to 1788 (MTSQKLVRLP…VKGTIRRVVL (333 aa)). Zn(2+) contacts are provided by H1471 and H1473. 2 residues coordinate (S)-dihydroorotate: R1475 and N1505. Residues K1556, H1590, C1613, H1614, and E1637 each coordinate Zn(2+). At K1556 the chain carries N6-carboxylysine. R1661 contacts (S)-dihydroorotate. A Zn(2+)-binding site is contributed by D1686. The active-site For DHOase activity is D1686. (S)-dihydroorotate contacts are provided by H1690 and P1702. The segment at 1789 to 1917 (RGEVAYIDGQ…GLLHPQTSPL (129 aa)) is linker. The disordered stretch occupies residues 1813–1911 (PQGAVPQPPP…QNLGSSGLLH (99 aa)). Residues 1825–1834 (PATTEITTTP) are compositionally biased toward low complexity. At S1859 the chain carries Phosphoserine; by RPS6KB1 and PKA. Basic and acidic residues predominate over residues 1866-1878 (EEPKEKPSRKVVE). Position 1873 is a phosphoserine; by PKC; in vitro (S1873). T1884 bears the Phosphothreonine mark. A compositionally biased stretch (polar residues) spans 1899–1911 (ASPQNLGSSGLLH). 2 positions are modified to phosphoserine: S1900 and S1938. Residues 1918 to 2225 (LHSLVGQHIL…ALLATVLGRF (308 aa)) are ATCase (Aspartate transcarbamylase). The carbamoyl phosphate site is built by R1975 and T1976. Residue K2003 coordinates L-aspartate. Carbamoyl phosphate-binding residues include R2024, H2052, and Q2055. L-aspartate is bound by residues R2085 and R2146. Carbamoyl phosphate-binding residues include M2185 and P2186.

In the N-terminal section; belongs to the CarA family. It in the 2nd section; belongs to the CarB family. The protein in the 3rd section; belongs to the metallo-dependent hydrolases superfamily. DHOase family. CAD subfamily. This sequence in the C-terminal section; belongs to the aspartate/ornithine carbamoyltransferase superfamily. ATCase family. In terms of assembly, homohexamer. Interacts with CIPC. The cofactor is Zn(2+). Mg(2+) is required as a cofactor. It depends on Mn(2+) as a cofactor. In terms of processing, activated by MAP kinase (Erk1/2) phosphorylation just prior to the S phase of the cell cycle, when the demand for pyrimidine nucleotides is greatest, and down-regulated as the cells emerge from S phase by protein kinase A (PKA) phosphorylation. Phosphorylation at Ser-1859 by RPS6KB1 downstream of MTOR promotes oligomerization and stimulates dihydroorotase activity. Phosphorylation at Ser-1406 reduces sensitivity to feedback inhibition by UTP.

The protein resides in the cytoplasm. Its subcellular location is the nucleus. The enzyme catalyses hydrogencarbonate + L-glutamine + 2 ATP + H2O = carbamoyl phosphate + L-glutamate + 2 ADP + phosphate + 2 H(+). The catalysed reaction is L-glutamine + H2O = L-glutamate + NH4(+). It catalyses the reaction hydrogencarbonate + NH4(+) + 2 ATP = carbamoyl phosphate + 2 ADP + phosphate + 2 H(+). It carries out the reaction carbamoyl phosphate + L-aspartate = N-carbamoyl-L-aspartate + phosphate + H(+). The enzyme catalyses (S)-dihydroorotate + H2O = N-carbamoyl-L-aspartate + H(+). It functions in the pathway pyrimidine metabolism; UMP biosynthesis via de novo pathway; (S)-dihydroorotate from bicarbonate: step 1/3. It participates in pyrimidine metabolism; UMP biosynthesis via de novo pathway; (S)-dihydroorotate from bicarbonate: step 2/3. Its pathway is pyrimidine metabolism; UMP biosynthesis via de novo pathway; (S)-dihydroorotate from bicarbonate: step 3/3. With respect to regulation, allosterically regulated and controlled by phosphorylation. 5-phosphoribose 1-diphosphate (PRPP) is an activator while UMP and UTP are inhibitors of the CPSase reaction. Multifunctional protein that encodes the first 3 enzymatic activities of the de novo pyrimidine pathway: carbamoylphosphate synthetase (CPSase; EC 6.3.5.5), aspartate transcarbamylase (ATCase; EC 2.1.3.2) and dihydroorotase (DHOase; EC 3.5.2.3). The CPSase-function is accomplished in 2 steps, by a glutamine-dependent amidotransferase activity (GATase) that binds and cleaves glutamine to produce ammonia, followed by an ammonium-dependent carbamoyl phosphate synthetase, which reacts with the ammonia, hydrogencarbonate and ATP to form carbamoyl phosphate. The endogenously produced carbamoyl phosphate is sequestered and channeled to the ATCase active site. ATCase then catalyzes the formation of carbamoyl-L-aspartate from L-aspartate and carbamoyl phosphate. In the last step, DHOase catalyzes the cyclization of carbamoyl aspartate to dihydroorotate. The sequence is that of Multifunctional protein CAD (CAD) from Mesocricetus auratus (Golden hamster).